Consider the following 224-residue polypeptide: Cysteine-rich hydrophobic domain-containing protein 1 (224 aa).

The segment at Met1 to His80 is disordered. Over residues Thr13 to Ala25 the composition is skewed to acidic residues. Positions Ala26–Gly40 are enriched in low complexity. A compositionally biased stretch (acidic residues) spans Pro41–Ala69. Residues Asp42–Pro70 are a coiled coil.

The protein belongs to the CHIC family. In terms of processing, palmitoylated. As to expression, equally expressed in various parts of the brain.

It localises to the cell membrane. The protein localises to the cytoplasmic vesicle. This Homo sapiens (Human) protein is Cysteine-rich hydrophobic domain-containing protein 1 (CHIC1).